The chain runs to 332 residues: Glycerol-3-phosphate dehydrogenase [NAD(P)+] (332 aa).

NADPH contacts are provided by Ser-11, Phe-12, Lys-32, and Lys-106. Lys-106, Gly-137, and Ser-139 together coordinate sn-glycerol 3-phosphate. Ala-141 is an NADPH binding site. Residues Lys-192, Asp-245, Ser-255, Arg-256, and Asn-257 each contribute to the sn-glycerol 3-phosphate site. Catalysis depends on Lys-192, which acts as the Proton acceptor. Arg-256 provides a ligand contact to NADPH. NADPH is bound by residues Val-280 and Glu-282.

This sequence belongs to the NAD-dependent glycerol-3-phosphate dehydrogenase family.

It localises to the cytoplasm. The catalysed reaction is sn-glycerol 3-phosphate + NAD(+) = dihydroxyacetone phosphate + NADH + H(+). It carries out the reaction sn-glycerol 3-phosphate + NADP(+) = dihydroxyacetone phosphate + NADPH + H(+). It functions in the pathway membrane lipid metabolism; glycerophospholipid metabolism. Functionally, catalyzes the reduction of the glycolytic intermediate dihydroxyacetone phosphate (DHAP) to sn-glycerol 3-phosphate (G3P), the key precursor for phospholipid synthesis. This chain is Glycerol-3-phosphate dehydrogenase [NAD(P)+], found in Staphylococcus haemolyticus (strain JCSC1435).